Consider the following 359-residue polypeptide: Probable deacetylase AF_0130 (359 aa).

His126 (proton donor/acceptor) is an active-site residue. Residues Asp162, His164, and Asp249 each coordinate Zn(2+).

Belongs to the histone deacetylase family. Requires Zn(2+) as cofactor.

Probable deacetylase. The polypeptide is Probable deacetylase AF_0130 (Archaeoglobus fulgidus (strain ATCC 49558 / DSM 4304 / JCM 9628 / NBRC 100126 / VC-16)).